The following is a 220-amino-acid chain: Tumor protein D54 (220 aa).

Met1 carries the N-acetylmethionine modification. Over residues Met1 to Asn14 the composition is skewed to polar residues. Residues Met1–Pro26 are disordered. Ser3, Ser12, and Ser19 each carry phosphoserine. A coiled-coil region spans residues Gly40–Gly82. 4 positions are modified to phosphoserine: Ser96, Ser149, Ser168, and Ser175. Thr177 bears the Phosphothreonine mark. At Ser180 the chain carries Phosphoserine. At Thr187 the chain carries Phosphothreonine. Residues Lys189 to Phe220 are disordered. The segment covering Ser200–Gln212 has biased composition (polar residues). Phosphoserine is present on residues Ser206 and Ser209.

Belongs to the TPD52 family. As to quaternary structure, forms a homodimer or heterodimer with other members of the family. Interacts with MAL2.

This Rattus norvegicus (Rat) protein is Tumor protein D54 (Tpd52l2).